We begin with the raw amino-acid sequence, 457 residues long: Argininosuccinate lyase (457 aa).

It belongs to the lyase 1 family. Argininosuccinate lyase subfamily.

Its subcellular location is the cytoplasm. The enzyme catalyses 2-(N(omega)-L-arginino)succinate = fumarate + L-arginine. Its pathway is amino-acid biosynthesis; L-arginine biosynthesis; L-arginine from L-ornithine and carbamoyl phosphate: step 3/3. This chain is Argininosuccinate lyase, found in Haemophilus influenzae (strain PittEE).